The sequence spans 642 residues: 1,4-alpha-glucan branching enzyme GlgB (642 aa).

Aspartate 304 (nucleophile) is an active-site residue. Catalysis depends on glutamate 355, which acts as the Proton donor.

The protein belongs to the glycosyl hydrolase 13 family. GlgB subfamily. Monomer.

It catalyses the reaction Transfers a segment of a (1-&gt;4)-alpha-D-glucan chain to a primary hydroxy group in a similar glucan chain.. It participates in glycan biosynthesis; glycogen biosynthesis. In terms of biological role, catalyzes the formation of the alpha-1,6-glucosidic linkages in glycogen by scission of a 1,4-alpha-linked oligosaccharide from growing alpha-1,4-glucan chains and the subsequent attachment of the oligosaccharide to the alpha-1,6 position. The protein is 1,4-alpha-glucan branching enzyme GlgB of Streptococcus pneumoniae serotype 4 (strain ATCC BAA-334 / TIGR4).